Consider the following 212-residue polypeptide: Anaphase-promoting complex subunit 10 (212 aa).

One can recognise a DOC domain in the interval 12 to 196; it reads MDEEERTSSR…PSAVLEARPG (185 aa).

Belongs to the APC10 family. As to quaternary structure, the APC/C complex is probably composed of at least 12 subunits: apc-2, apc-10, apc-11, cdc-26, emb-1, emb-27, emb-30, mat-1, mat-2, mat-3, such-1 and gfi-3.

The protein operates within protein modification; protein ubiquitination. Functionally, probable component of the anaphase promoting complex/cyclosome (APC/C), a cell cycle-regulated E3 ubiquitin ligase that controls progression through mitosis and the G1 phase of the cell cycle. The APC/C complex acts by mediating ubiquitination and subsequent degradation of target proteins. The sequence is that of Anaphase-promoting complex subunit 10 from Caenorhabditis elegans.